The primary structure comprises 115 residues: Biotrophy-associated secreted protein 1 (115 aa).

The N-terminal stretch at 1–22 (MHVFNFAALFTVLATFTATAAA) is a signal peptide. Positions 24 to 115 (DQGSNTFDQR…GIRRVENYYP (92 aa)) are disordered. Composition is skewed to basic and acidic residues over residues 46-55 (IREEKQENVG) and 91-115 (QQKE…NYYP).

It localises to the secreted. It is found in the host cytoplasm. Secreted effector involved in biotrophic colonization of plant cells. Induces an early, basal defense response in susceptible rice, including rapid callose deposition and ROS production in leaves and calli. Also promotes sporulation and mycelia growth suggesting a role across the whole process of interaction, from the biotrophic phase to sporulation. This Pyricularia oryzae (strain 70-15 / ATCC MYA-4617 / FGSC 8958) (Rice blast fungus) protein is Biotrophy-associated secreted protein 1.